The primary structure comprises 777 residues: Ethylene receptor 4 (777 aa).

3 helical membrane passes run 49–69, 77–97, and 113–133; these read LLIA…ATCA, AVLH…LAAF, and AAKV…LTFI. Cys-88 and His-92 together coordinate Cu cation. The 161-residue stretch at 184-344 folds into the GAF domain; the sequence is DAHAILRTTA…VVADQAAVAL (161 aa). The Histidine kinase domain maps to 387 to 521; sequence AMCHAMRRPV…NTESGACRLS (135 aa). Position 390 is a phosphohistidine; by autocatalysis (His-390). The region spanning 645-774 is the Response regulatory domain; the sequence is RVLLADDDAM…ALGAQLCRVL (130 aa). Asp-696 carries the 4-aspartylphosphate modification.

This sequence belongs to the ethylene receptor family. Cu cation serves as cofactor.

Its subcellular location is the endoplasmic reticulum membrane. The enzyme catalyses ATP + protein L-histidine = ADP + protein N-phospho-L-histidine.. Functionally, ethylene receptor related to bacterial two-component regulators. Acts as a redundant negative regulator of ethylene signaling. The protein is Ethylene receptor 4 of Oryza sativa subsp. indica (Rice).